A 594-amino-acid chain; its full sequence is Tripeptidyl-peptidase sed4 (594 aa).

Positions 1–20 are cleaved as a signal peptide; it reads MLSSTLYAGWLLSLAAPALC. Positions 21–187 are cleaved as a propeptide — removed in mature form; it reads VVQEKLSAVP…AVKLPALPRR (167 aa). 3 N-linked (GlcNAc...) asparagine glycosylation sites follow: Asn191, Asn229, and Asn250. The 398-residue stretch at 197-594 folds into the Peptidase S53 domain; sequence LITPDCLVEM…MKLKELVLSL (398 aa). Catalysis depends on charge relay system residues Glu272, Asp276, and Ser494. Asp536 and Ile537 together coordinate Ca(2+). Asn568 is a glycosylation site (N-linked (GlcNAc...) asparagine). Ca(2+) contacts are provided by Gly572 and Asp574.

Ca(2+) serves as cofactor. In terms of processing, N-glycosylated.

The protein localises to the secreted. The protein resides in the extracellular space. The catalysed reaction is Release of an N-terminal tripeptide from a polypeptide.. Secreted tripeptidyl-peptidase which degrades proteins at acidic pHs and is involved in virulence. The chain is Tripeptidyl-peptidase sed4 (sed4) from Aspergillus fumigatus (strain ATCC MYA-4609 / CBS 101355 / FGSC A1100 / Af293) (Neosartorya fumigata).